The following is a 137-amino-acid chain: MLPFMLSSFLGASPSIWPLAPAEAFQLPPCQLINQTVSLEKEGCPKCHPVETTICSGHCITKDPVMKTRYVYQHVCTYRDLHYKTFELPDCPLGVDPTVTYPVAVSCNCGLCAMDTSDCTFESLQPNFCMNDIPFYY.

Positions 1 to 24 (MLPFMLSSFLGASPSIWPLAPAEA) are cleaved as a signal peptide. Cystine bridges form between Cys-30/Cys-76, Cys-44/Cys-91, Cys-47/Cys-129, Cys-55/Cys-107, Cys-59/Cys-109, and Cys-112/Cys-119. Asn-34 is a glycosylation site (N-linked (GlcNAc...) asparagine).

Belongs to the glycoprotein hormones subunit beta family. Heterodimer of an alpha and a beta chain.

The protein localises to the secreted. Its function is as follows. Involved in gametogenesis and steroidogenesis. The protein is Gonadotropin subunit beta-2 (cgbb) of Acanthopagrus latus (Yellowfin seabream).